The primary structure comprises 430 residues: Tol-Pal system protein TolB (430 aa).

The signal sequence occupies residues 1 to 21; sequence MKQALRVAVSFFMLWAAVLHA.

It belongs to the TolB family. In terms of assembly, the Tol-Pal system is composed of five core proteins: the inner membrane proteins TolA, TolQ and TolR, the periplasmic protein TolB and the outer membrane protein Pal. They form a network linking the inner and outer membranes and the peptidoglycan layer.

It is found in the periplasm. Its function is as follows. Part of the Tol-Pal system, which plays a role in outer membrane invagination during cell division and is important for maintaining outer membrane integrity. TolB occupies a key intermediary position in the Tol-Pal system because it communicates directly with both membrane-embedded components, Pal in the outer membrane and TolA in the inner membrane. The polypeptide is Tol-Pal system protein TolB (Enterobacter sp. (strain 638)).